Consider the following 373-residue polypeptide: Bilirubin reductase (373 aa).

Gln92 contacts FMN. Arg168 functions as the Proton donor in the catalytic mechanism. Residue Lys215 coordinates FMN. Positions 344, 347, 351, and 363 each coordinate [4Fe-4S] cluster.

This sequence belongs to the NADH:flavin oxidoreductase/NADH oxidase family. Requires FMN as cofactor. The cofactor is [4Fe-4S] cluster.

It catalyses the reaction urobilinogen + 4 A = (4Z,15Z)-bilirubin IXalpha + 4 AH2. The enzyme catalyses urobilinogen + 2 A = (4Z,15Z)-mesobilirubin IXalpha + 2 AH2. It participates in porphyrin-containing compound metabolism; protoheme degradation. Functionally, bilirubin reductase that catalyzes reduction of mesobilirubin and/or bilirubin to urobilinogen, a key step during heme degradation. Cooperates with BilS, which is probably involved in electron transfer for BilR. Urobilinogen then spontaneously degrades into urobilin, which gives urine its distinctive yellow color. This is Bilirubin reductase from Clostridium symbiosum (strain WAL-14163).